Reading from the N-terminus, the 405-residue chain is Glutamate-pyruvate aminotransferase AlaA (405 aa).

L-alanine contacts are provided by G41 and N179. N6-(pyridoxal phosphate)lysine is present on K240. L-alanine is bound at residue R378.

Belongs to the class-I pyridoxal-phosphate-dependent aminotransferase family. Homodimer. It depends on pyridoxal 5'-phosphate as a cofactor.

It is found in the cytoplasm. It carries out the reaction L-alanine + 2-oxoglutarate = pyruvate + L-glutamate. The protein operates within amino-acid biosynthesis; L-alanine biosynthesis. Functionally, involved in the biosynthesis of alanine. Catalyzes the transamination of pyruvate by glutamate, leading to the formation of L-alanine and 2-oxoglutarate. Is also able to catalyze the reverse reaction. The polypeptide is Glutamate-pyruvate aminotransferase AlaA (Escherichia coli (strain K12)).